The chain runs to 554 residues: Malate synthase 1 (554 aa).

Arginine 177 serves as the catalytic Proton acceptor. Aspartate 457 serves as the catalytic Proton donor. Positions 552 to 554 match the SKL peroxisome targeting motif motif; that stretch reads SKL.

This sequence belongs to the malate synthase family. Interacts with PEX9.

Its subcellular location is the peroxisome matrix. It carries out the reaction glyoxylate + acetyl-CoA + H2O = (S)-malate + CoA + H(+). It functions in the pathway carbohydrate metabolism; glyoxylate cycle; (S)-malate from isocitrate: step 2/2. In terms of biological role, malate synthase which takes part in the glyoxylate cycle. MLS1 activity is essential for cells to grow on oleic acid as a sole carbon source. Two steps of the glyoxylate cycle take place in the cytosol, the splitting of isocitrate into succinate and glyoxylate, and the dehydrogenation of malate to oxaloacetate. However, the formation of malate from glyoxylate and acetyl-CoA undertaken MLS1, occurs in the peroxisomes when cells are grown on oleic acid. The source of acetyl-CoA being either peroxisomal when breaking down fatty acids, or cytosolic when extra-cellular two-carbon substrates are used, therefore, although not strictly essential, the peroxisomal localization of MLS1 appears to be advantageous for cells growing on oleic acid, in that acetyl-CoA production and utilization are thereby intimately compartmentalized together to increase efficiency. The chain is Malate synthase 1 from Saccharomyces cerevisiae (strain ATCC 204508 / S288c) (Baker's yeast).